We begin with the raw amino-acid sequence, 289 residues long: GTPase Era (289 aa).

The 166-residue stretch at 2 to 167 (KSGFVSIIGR…LDEICKLLPE (166 aa)) folds into the Era-type G domain. The G1 stretch occupies residues 10–17 (GRTNAGKS). 10-17 (GRTNAGKS) provides a ligand contact to GTP. The segment at 36 to 40 (NATRR) is G2. Residues 57-60 (DTPG) are G3. GTP is bound by residues 57 to 61 (DTPGL) and 116 to 119 (TKVD). The tract at residues 116–119 (TKVD) is G4. The segment at 146–148 (FST) is G5. Residues 194 to 274 (IYENLSDEIP…FLKLDVVVKK (81 aa)) enclose the KH type-2 domain.

It belongs to the TRAFAC class TrmE-Era-EngA-EngB-Septin-like GTPase superfamily. Era GTPase family. In terms of assembly, monomer.

The protein localises to the cytoplasm. The protein resides in the cell inner membrane. Functionally, an essential GTPase that binds both GDP and GTP, with rapid nucleotide exchange. Plays a role in 16S rRNA processing and 30S ribosomal subunit biogenesis and possibly also in cell cycle regulation and energy metabolism. This is GTPase Era from Campylobacter concisus (strain 13826).